A 171-amino-acid polypeptide reads, in one-letter code: Crossover junction endodeoxyribonuclease RuvC (171 aa).

Residues Asp-7, Glu-74, and Asp-147 contribute to the active site. Mg(2+)-binding residues include Asp-7, Glu-74, and Asp-147.

Belongs to the RuvC family. In terms of assembly, homodimer which binds Holliday junction (HJ) DNA. The HJ becomes 2-fold symmetrical on binding to RuvC with unstacked arms; it has a different conformation from HJ DNA in complex with RuvA. In the full resolvosome a probable DNA-RuvA(4)-RuvB(12)-RuvC(2) complex forms which resolves the HJ. Mg(2+) is required as a cofactor.

It is found in the cytoplasm. The catalysed reaction is Endonucleolytic cleavage at a junction such as a reciprocal single-stranded crossover between two homologous DNA duplexes (Holliday junction).. Functionally, the RuvA-RuvB-RuvC complex processes Holliday junction (HJ) DNA during genetic recombination and DNA repair. Endonuclease that resolves HJ intermediates. Cleaves cruciform DNA by making single-stranded nicks across the HJ at symmetrical positions within the homologous arms, yielding a 5'-phosphate and a 3'-hydroxyl group; requires a central core of homology in the junction. The consensus cleavage sequence is 5'-(A/T)TT(C/G)-3'. Cleavage occurs on the 3'-side of the TT dinucleotide at the point of strand exchange. HJ branch migration catalyzed by RuvA-RuvB allows RuvC to scan DNA until it finds its consensus sequence, where it cleaves and resolves the cruciform DNA. The protein is Crossover junction endodeoxyribonuclease RuvC of Acidobacterium capsulatum (strain ATCC 51196 / DSM 11244 / BCRC 80197 / JCM 7670 / NBRC 15755 / NCIMB 13165 / 161).